A 344-amino-acid chain; its full sequence is MQFDAVLLLSFGGPEGPEQVRPFLENVTRGRGVPAERLDAVAEHYLHFGGVSPINGINRTLIAELEAQQELPVYFGNRNWEPYVEDAVTAMRDNGVRRAAVFATSAWSGYSSCTQYVEDIARARRAAGRDAPELVKLRPYFDHPLFVEMFADAITAAAATVRGDARLVFTAHSIPTAADRRCGPNLYSRQVAYATRLVAAAAGYCDFDLAWQSRSGPPQVPWLEPDVTDQLTGLAGAGINAVIVCPIGFVADHIEVVWDLDHELRLQAEAAGIAYARASTPNADPRFARLARGLIDELRYGRIPARVSGPDPVPGCLSSINGQPCRPPHCVASVSPARPSAGSP.

Ser-52 lines the Fe-coproporphyrin III pocket. Cys-113 is a binding site for [2Fe-2S] cluster. Tyr-116 lines the Fe-coproporphyrin III pocket. Residues His-172 and Glu-255 each coordinate Fe(2+). Cys-316, Cys-325, and Cys-330 together coordinate [2Fe-2S] cluster.

It belongs to the ferrochelatase family. The cofactor is [2Fe-2S] cluster.

The protein localises to the cytoplasm. The catalysed reaction is Fe-coproporphyrin III + 2 H(+) = coproporphyrin III + Fe(2+). The protein operates within porphyrin-containing compound metabolism; protoheme biosynthesis. Involved in coproporphyrin-dependent heme b biosynthesis. Catalyzes the insertion of ferrous iron into coproporphyrin III to form Fe-coproporphyrin III. In Mycobacterium bovis (strain ATCC BAA-935 / AF2122/97), this protein is Coproporphyrin III ferrochelatase.